A 351-amino-acid polypeptide reads, in one-letter code: Transaldolase (351 aa).

The Schiff-base intermediate with substrate role is filled by Lys-138.

The protein belongs to the transaldolase family. Type 2 subfamily.

The protein resides in the cytoplasm. It carries out the reaction D-sedoheptulose 7-phosphate + D-glyceraldehyde 3-phosphate = D-erythrose 4-phosphate + beta-D-fructose 6-phosphate. Its pathway is carbohydrate degradation; pentose phosphate pathway; D-glyceraldehyde 3-phosphate and beta-D-fructose 6-phosphate from D-ribose 5-phosphate and D-xylulose 5-phosphate (non-oxidative stage): step 2/3. In terms of biological role, transaldolase is important for the balance of metabolites in the pentose-phosphate pathway. The protein is Transaldolase of Neisseria meningitidis serogroup C / serotype 2a (strain ATCC 700532 / DSM 15464 / FAM18).